A 2664-amino-acid chain; its full sequence is Inositol 1,4,5-trisphosphate-gated calcium channel ITPR3 (2664 aa).

At 1–2227 (MSEMSSFLHI…YVEGASTGVL (2227 aa)) the chain is on the cytoplasmic side. 5 MIR domains span residues 113-173 (GDVV…LRSN), 174-224 (GDNV…INLF), 232-288 (EEVL…VEVV), 295-372 (GGAG…LDPT), and 378-434 (DSFV…IVSV). Residues R266, T268, L269, and R270 each contribute to the 1D-myo-inositol 1,4,5-trisphosphate site. Residues 320 to 344 (NPSYKGDASDPKAAGTGAQGRTGRR) are disordered. 1D-myo-inositol 1,4,5-trisphosphate contacts are provided by R503, K507, R510, Y567, R568, and K569. R743 lines the Ca(2+) pocket. 2 positions are modified to phosphoserine: S909 and S927. Ca(2+) is bound by residues E1115 and E1118. Disordered regions lie at residues 1124–1158 (KGASKGEEGEAGPAKDKKERPTDEEGFLHPPGEKS) and 1790–1850 (QQET…VGER). The segment covering 1792–1805 (ETKSTVAVNMSDLG) has biased composition (polar residues). Residues S1806, S1825, and S1827 each carry the phosphoserine modification. The Ca(2+) site is built by E1875 and E1939. A1989, E2142, and K2145 together coordinate ATP. A helical transmembrane segment spans residues 2228-2248 (GSPLISLLFWILICFSIAALF). Residues 2249–2256 (TKRYSVRP) lie on the Extracellular side of the membrane. A helical transmembrane segment spans residues 2257–2277 (LIVALILRSIYYLGIGPTLNI). At 2278 to 2286 (LGALNLTNK) the chain is on the cytoplasmic side. A helical transmembrane segment spans residues 2287-2304 (IVFVVSFVGNRGTFIRGY). The Extracellular segment spans residues 2305 to 2318 (KAMVMDMEFLYHVG). The helical transmembrane segment at 2319-2339 (YILTSVLGLFAHELFYSILLF) threads the bilayer. Topologically, residues 2340–2361 (DLIYREETLFNVIKSVTRNGRS) are cytoplasmic. A helical membrane pass occupies residues 2362 to 2382 (ILLTALLALILVYLFSIVGFL). The Extracellular segment spans residues 2383 to 2489 (FLKDDFILEV…ESLFPARVVY (107 aa)). Cysteines 2448 and 2454 form a disulfide. Residues 2490 to 2510 (DLLFFFIVIIIVLNLIFGVII) form a helical membrane-spanning segment. The Cytoplasmic segment spans residues 2511–2664 (DTFADLRSEK…FVDVQNCMSR (154 aa)). ATP is bound by residues C2531 and F2532. Position 2531 (C2531) interacts with Zn(2+). 2 residues coordinate Zn(2+): C2534 and H2551. K2553, H2556, N2557, and M2558 together coordinate ATP. H2556 serves as a coordination point for Zn(2+). Residue T2574 participates in Ca(2+) binding. Residues S2602 and S2663 each carry the phosphoserine modification.

The protein belongs to the InsP3 receptor family. Homotetramer. Homodimer. Interacts with TRPC1, TRPC3 and TRPC4. Interacts with TRPV4. Interacts with SIGMAR1. Interacts with PML and AKT1. Interacts with IRAG2 (via coiled-coil domain). Interacts with CABP1. Interacts with TMBIM4/LFG4. Interacts with CEMIP. Interacts with TESPA1. Interacts with TMEM203. Interacts with BOK; regulates ITPR3 expression. Interacts with BCL2L10. Interacts with CHGA and CHGB. Post-translationally, phosphorylated by AKT1 on serine and/or threonine residues.

The protein localises to the endoplasmic reticulum membrane. The protein resides in the cytoplasmic vesicle. It localises to the secretory vesicle membrane. The enzyme catalyses Ca(2+)(in) = Ca(2+)(out). With respect to regulation, inositol 1,4,5-trisphosphate-gated calcium channel is regulated by cytosolic calcium in a biphasic manner. At low concentrations, cytosolic calcium binds at a high-affinity juxtamembrane domain (JD) calcium binding site, allowing ITPR3 to activate by escaping a low-energy resting state through an ensemble of preactivated states. At high cytosolic calcium concentrations, ITPR3 preferentially enters an inhibited state stabilized by calcium binding at a second, low-affinity cytoplasmic domain (CD) calcium binding site. Inositol 1,4,5-trisphosphate-gated calcium channel that, upon 1D-myo-inositol 1,4,5-trisphosphate binding, transports calcium from the endoplasmic reticulum lumen to cytoplasm, thus releasing the intracellular calcium and therefore participates in cellular calcium ion homeostasis. 1D-myo-inositol 1,4,5-trisphosphate binds to the ligand-free channel without altering its global conformation, yielding the low-energy resting state, then progresses through resting-to preactivated transitions to the higher energy preactivated state, which increases affinity for calcium, promoting binding of the low basal cytosolic calcium at the juxtamembrane domain (JD) site, favoring the transition through the ensemble of high-energy intermediate states along the trajectory to the fully-open activated state. Upon opening, releases calcium in the cytosol where it can bind to the low-affinity cytoplasmic domain (CD) site and stabilizes the inhibited state to terminate calcium release. The chain is Inositol 1,4,5-trisphosphate-gated calcium channel ITPR3 from Bos taurus (Bovine).